Here is a 634-residue protein sequence, read N- to C-terminus: MAELNPLAEELSCSVCLELFKEPVTTPCGHNFCMSCLDETWVVQGPPYRCPQCRKVYQVRPQLQKNTVMCAVVEQFLQAEQARTPVDDWTPPARFSASSAATQVACDHCLTEIAVKTCLVCMASFCQEHLRPHFDSPAFQDHPLQSPIRDLLRRKCTQHNRLRELFCPEHGECICHICLVEHKTCSPTTLSQASADLEYKLRNKLTIMHSHINGATKALEDVRSKQQCVQDSMKRKMEQLRQEYMEMKAVIDAAETSSLRKLKEEEKRVYGKFDTIYQVLVKKKSEMQKLKAEVELIMDKGDEFEFLEKAAKLQGESTKPVYIPKIDLDHDLIMGIYQGAADLKSELKHSIKKLQKKSEEHNGSGNKGDQTQSTFKPVQPSKKTIQEKKTKKTPVAPGPPSHFSPNKLPTFGAPGQSLDSKATSPDAAPKASAAQPDSVGVKAKVLENFLTKSRTELLEYFVKVIFDYNTAHNKVSLSNKYTTASVSDGLQHYRSHPQRFTYCSQVLGLHCYKNGIHYWEVELQKNNFCGVGICYGSMERQGPESRLGRNPNSWCVEWFNNKISAWHNNVEKTLPSTKATRVGVLLNCDHGFVIFFAVTEKVHLMYKFKVDFTEALYPAFWVFSAGTTLSICSK.

The segment at 13 to 54 (CSVCLELFKEPVTTPCGHNFCMSCLDETWVVQGPPYRCPQCR) adopts an RING-type zinc-finger fold. Position 90 is a phosphothreonine (T90). S99 is subject to Phosphoserine. K116 participates in a covalent cross-link: Glycyl lysine isopeptide (Lys-Gly) (interchain with G-Cter in ISG15). Residues 215-305 (ATKALEDVRS…LIMDKGDEFE (91 aa)) are a coiled coil. N6-acetyllysine is present on K272. Phosphotyrosine is present on Y277. The segment at 353–437 (KLQKKSEEHN…APKASAAQPD (85 aa)) is disordered. Polar residues predominate over residues 363–376 (GSGNKGDQTQSTFK). Positions 444–634 (KVLENFLTKS…AGTTLSICSK (191 aa)) constitute a B30.2/SPRY domain. K572 carries the N6-acetyllysine modification.

As to quaternary structure, forms homodimers. Interacts (via SPRY domain) with RIGI (via CARD domain). Interacts with ZFHX3. Interacts with NLRP12; this interaction reduces the E3 ubiquitin ligase TRIM25-mediated 'Lys-63'-linked RIGI activation. Interacts with the KHDC3L/FILIA-OOEP/FLOPED scaffold complex and BLM at DNA replication forks. Interacts with RTN3; this interaction prevents RIGI ubiquitination. Interacts with YWHAE. Auto-ISGylated. In terms of tissue distribution, ubiquitous.

It is found in the cytoplasm. It localises to the stress granule. The protein resides in the nucleus. The catalysed reaction is S-ubiquitinyl-[E2 ubiquitin-conjugating enzyme]-L-cysteine + [acceptor protein]-L-lysine = [E2 ubiquitin-conjugating enzyme]-L-cysteine + N(6)-ubiquitinyl-[acceptor protein]-L-lysine.. The enzyme catalyses ATP + [ISG15] + [protein]-lysine = AMP + diphosphate + [protein]-N-ISGyllysine.. It functions in the pathway protein modification; protein ubiquitination. Functionally, functions as a ubiquitin E3 ligase and as an ISG15 E3 ligase. Involved in innate immune defense against viruses by mediating ubiquitination of RIGI and IFIH1. Mediates 'Lys-63'-linked polyubiquitination of the RIGI N-terminal CARD-like region and may play a role in signal transduction that leads to the production of interferons in response to viral infection. Mediates 'Lys-63'-linked polyubiquitination of IFIH1. Promotes ISGylation of 14-3-3 sigma (SFN), an adapter protein implicated in the regulation of a large spectrum signaling pathway. Mediates estrogen action in various target organs. Mediates the ubiquitination and subsequent proteasomal degradation of ZFHX3. Plays a role in promoting the restart of stalled replication forks via interaction with the KHDC3L-OOEP scaffold and subsequent ubiquitination of BLM, resulting in the recruitment and retainment of BLM at DNA replication forks. Plays an essential role in the antiviral activity of ZAP/ZC3HAV1; an antiviral protein which inhibits the replication of certain viruses. Mechanistically, mediates 'Lys-63'-linked polyubiquitination of ZAP/ZC3HAV1 that is required for its optimal binding to target mRNA. Also mediates the ubiquitination of various substrates implicated in stress granule formation, nonsense-mediated mRNA decay, nucleoside synthesis and mRNA translation and stability. This chain is E3 ubiquitin/ISG15 ligase TRIM25 (Trim25), found in Mus musculus (Mouse).